Here is a 380-residue protein sequence, read N- to C-terminus: Succinyl-diaminopimelate desuccinylase (380 aa).

Zn(2+) is bound at residue His-70. Asp-72 is an active-site residue. Zn(2+) is bound at residue Asp-103. The active-site Proton acceptor is the Glu-137. Residues Glu-138, Glu-166, and His-352 each coordinate Zn(2+).

It belongs to the peptidase M20A family. DapE subfamily. As to quaternary structure, homodimer. Zn(2+) is required as a cofactor. Co(2+) serves as cofactor.

The catalysed reaction is N-succinyl-(2S,6S)-2,6-diaminopimelate + H2O = (2S,6S)-2,6-diaminopimelate + succinate. It functions in the pathway amino-acid biosynthesis; L-lysine biosynthesis via DAP pathway; LL-2,6-diaminopimelate from (S)-tetrahydrodipicolinate (succinylase route): step 3/3. Catalyzes the hydrolysis of N-succinyl-L,L-diaminopimelic acid (SDAP), forming succinate and LL-2,6-diaminopimelate (DAP), an intermediate involved in the bacterial biosynthesis of lysine and meso-diaminopimelic acid, an essential component of bacterial cell walls. This chain is Succinyl-diaminopimelate desuccinylase, found in Azoarcus sp. (strain BH72).